Consider the following 347-residue polypeptide: Histone deacetylase 11 (347 aa).

The segment at Thr-14 to Gly-326 is histone deacetylase. His-143 is a catalytic residue.

Belongs to the histone deacetylase family. Interacts with HDAC6. As to expression, weakly expressed in most tissues. Strongly expressed in brain, heart, skeletal muscle, kidney and testis.

It localises to the nucleus. The enzyme catalyses N(6)-acetyl-L-lysyl-[histone] + H2O = L-lysyl-[histone] + acetate. Responsible for the deacetylation of lysine residues on the N-terminal part of the core histones (H2A, H2B, H3 and H4). Histone deacetylation gives a tag for epigenetic repression and plays an important role in transcriptional regulation, cell cycle progression and developmental events. Histone deacetylases act via the formation of large multiprotein complexes. This Homo sapiens (Human) protein is Histone deacetylase 11 (HDAC11).